Reading from the N-terminus, the 258-residue chain is Acetylglutamate kinase (258 aa).

Substrate contacts are provided by residues 44–45 (GG), Arg-66, and Asn-158. Residues 181–186 (DVSGIL) and 209–211 (IIT) each bind ATP.

This sequence belongs to the acetylglutamate kinase family. ArgB subfamily. In terms of assembly, homodimer.

It is found in the cytoplasm. It catalyses the reaction N-acetyl-L-glutamate + ATP = N-acetyl-L-glutamyl 5-phosphate + ADP. It participates in amino-acid biosynthesis; L-arginine biosynthesis; N(2)-acetyl-L-ornithine from L-glutamate: step 2/4. Its function is as follows. Catalyzes the ATP-dependent phosphorylation of N-acetyl-L-glutamate. The polypeptide is Acetylglutamate kinase (Shigella sonnei (strain Ss046)).